We begin with the raw amino-acid sequence, 276 residues long: Ribosomal RNA small subunit methyltransferase A (276 aa).

Positions 27, 29, 54, 75, 101, and 122 each coordinate S-adenosyl-L-methionine.

The protein belongs to the class I-like SAM-binding methyltransferase superfamily. rRNA adenine N(6)-methyltransferase family. RsmA subfamily.

The protein resides in the cytoplasm. It catalyses the reaction adenosine(1518)/adenosine(1519) in 16S rRNA + 4 S-adenosyl-L-methionine = N(6)-dimethyladenosine(1518)/N(6)-dimethyladenosine(1519) in 16S rRNA + 4 S-adenosyl-L-homocysteine + 4 H(+). Its function is as follows. Specifically dimethylates two adjacent adenosines (A1518 and A1519) in the loop of a conserved hairpin near the 3'-end of 16S rRNA in the 30S particle. May play a critical role in biogenesis of 30S subunits. In Brucella abortus biovar 1 (strain 9-941), this protein is Ribosomal RNA small subunit methyltransferase A.